Consider the following 463-residue polypeptide: Elongation factor 1-alpha 2 (463 aa).

Residue Gly2 is modified to N,N,N-trimethylglycine. Residues 5–242 (KTHINIVVIG…DTILPPTRPT (238 aa)) form the tr-type G domain. A G1 region spans residues 14–21 (GHVDSGKS). Residues Asp17, Ser18, Gly19, Lys20, Ser21, and Thr22 each contribute to the GTP site. Residue Asp17 participates in Mg(2+) binding. Residue Lys36 is modified to N6,N6,N6-trimethyllysine; alternate. At Lys36 the chain carries N6,N6-dimethyllysine; alternate. Position 36 is an N6-methyllysine; alternate (Lys36). Lys55 bears the N6,N6,N6-trimethyllysine mark. Position 55 is an N6,N6-dimethyllysine (Lys55). A G2 region spans residues 70-74 (GITID). Lys79 is modified (N6,N6,N6-trimethyllysine). Positions 91-94 (DAPG) are G3. Residues Asn153, Lys154, and Asp156 each contribute to the GTP site. The tract at residues 153-156 (NKMD) is G4. At Ser163 the chain carries Phosphoserine. Lys165 is subject to N6,N6-dimethyllysine; alternate. Lys165 carries the post-translational modification N6-methyllysine; alternate. Lys165 carries the post-translational modification N6,N6,N6-trimethyllysine; alternate; by EEF1AKMT3. Position 179 is an N6-acetyllysine (Lys179). Positions 194, 195, and 196 each coordinate GTP. The interval 194 to 196 (SGW) is G5. A Phosphoserine modification is found at Ser224. Thr239 carries the post-translational modification Phosphothreonine. 5-glutamyl glycerylphosphorylethanolamine is present on residues Glu301 and Glu374. Position 439 is an N6-acetyllysine (Lys439). The disordered stretch occupies residues 444 to 463 (KSGGAGKVTKSAQKAQKAGK).

This sequence belongs to the TRAFAC class translation factor GTPase superfamily. Classic translation factor GTPase family. EF-Tu/EF-1A subfamily. As to quaternary structure, homodimer; arranged in a 'head to tail' dimer configuration. In terms of processing, trimethylated at Lys-165 by EEF1AKMT3. Mono-, di-, and trimethylated at Lys-36 by EEF1AKMT4; trimethylated form is predominant. Methylation by EEF1AKMT4 contributes to the fine-tuning of translation rates for a subset of tRNAs. Trimethylated at the N-terminus and dimethylated at Lys-55 by METTL13.

It is found in the endoplasmic reticulum membrane. It catalyses the reaction GTP + H2O = GDP + phosphate + H(+). Translation elongation factor that catalyzes the GTP-dependent binding of aminoacyl-tRNA (aa-tRNA) to the A-site of ribosomes during the elongation phase of protein synthesis. Base pairing between the mRNA codon and the aa-tRNA anticodon promotes GTP hydrolysis, releasing the aa-tRNA from EEF1A1 and allowing its accommodation into the ribosome. The growing protein chain is subsequently transferred from the P-site peptidyl tRNA to the A-site aa-tRNA, extending it by one amino acid through ribosome-catalyzed peptide bond formation. The protein is Elongation factor 1-alpha 2 (EEF1A2) of Bos taurus (Bovine).